The sequence spans 90 residues: Antitoxin epsilon (90 aa).

The protein belongs to the epsilon antitoxin family. As to quaternary structure, in the presence of the zeta toxin, forms an inactive PezA(2)PezT(2) heterotetramer. The heterotetramer is still able to bind the zeta toxin substrate UNAG.

In terms of biological role, antitoxin component of a type II toxin-antitoxin (TA) system. Neutralizes the toxic effect of cognate zeta toxin. Part of a postsegregational killing (PSK) system involved in the killing of plasmid-free cells. Continuous synthesis of the epsilon antitoxin is required to counteract the zeta toxin. The sequence is that of Antitoxin epsilon from Streptococcus pyogenes.